Here is a 176-residue protein sequence, read N- to C-terminus: dCTP deaminase (176 aa).

Residues 99-104 (RSTLAR) and D115 contribute to the dCTP site. E125 acts as the Proton donor/acceptor in catalysis. Q163 is a dCTP binding site.

This sequence belongs to the dCTP deaminase family. In terms of assembly, homotrimer.

The enzyme catalyses dCTP + H2O + H(+) = dUTP + NH4(+). It functions in the pathway pyrimidine metabolism; dUMP biosynthesis; dUMP from dCTP (dUTP route): step 1/2. Catalyzes the deamination of dCTP to dUTP. In Pyrobaculum calidifontis (strain DSM 21063 / JCM 11548 / VA1), this protein is dCTP deaminase.